We begin with the raw amino-acid sequence, 33 residues long: Mu-theraphotoxin-Tp1a (33 aa).

3 cysteine pairs are disulfide-bonded: Cys-2/Cys-17, Cys-9/Cys-22, and Cys-16/Cys-29. The residue at position 33 (Ile-33) is an Isoleucine amide.

This sequence belongs to the neurotoxin 10 (Hwtx-1) family. 55 (ProTx-III) subfamily. As to expression, expressed by the venom gland.

The protein resides in the secreted. Functionally, inhibits voltage-gated sodium channels without significantly altering the voltage dependence of activation or inactivation. Preferentially inhibits human Nav1.7/SCN9A (IC(50)=2.1 nM) &gt; human Nav1.6/SCN8A &gt; human Nav1.2/SCN2A &gt; human Nav1.1/SCN1A &gt; human Nav1.3/SCN3A channels. Exhibits analgesic properties by reversing spontaneous pain induced in mice by intraplantar injection with OD1 (AC P84646), a scorpion toxin that potentiates human Nav1.7/SCN9A. The polypeptide is Mu-theraphotoxin-Tp1a (Thrixopelma pruriens (Peruvian green velvet tarantula)).